The primary structure comprises 428 residues: Trigger factor (428 aa).

The region spanning 166-250 is the PPIase FKBP-type domain; the sequence is GDIVTFDFKG…IKNIKEKILP (85 aa).

This sequence belongs to the FKBP-type PPIase family. Tig subfamily.

The protein resides in the cytoplasm. It carries out the reaction [protein]-peptidylproline (omega=180) = [protein]-peptidylproline (omega=0). Involved in protein export. Acts as a chaperone by maintaining the newly synthesized protein in an open conformation. Functions as a peptidyl-prolyl cis-trans isomerase. The protein is Trigger factor of Mycoplasma capricolum subsp. capricolum (strain California kid / ATCC 27343 / NCTC 10154).